A 157-amino-acid polypeptide reads, in one-letter code: Tripartite terminase subunit 2 (157 aa).

The segment at 1-69 is disordered; that stretch reads MSWAKQRVPF…DGEDGHALPD (69 aa). Residues 11-27 are compositionally biased toward acidic residues; the sequence is LDDDDGEEENDVQDDVD.

Belongs to the herpesviridae TRM2 protein family. In terms of assembly, associates with TRM1 and TRM3 to form the tripartite terminase complex.

The protein resides in the host nucleus. Component of the molecular motor that translocates viral genomic DNA in empty capsid during DNA packaging. Forms a tripartite terminase complex together with TRM1 and TRM3 in the host cytoplasm. Once the complex reaches the host nucleus, it interacts with the capsid portal vertex. This portal forms a ring in which genomic DNA is translocated into the capsid. The polypeptide is Tripartite terminase subunit 2 (Homo sapiens (Human)).